Here is a 142-residue protein sequence, read N- to C-terminus: Large ribosomal subunit protein uL13 (142 aa).

Belongs to the universal ribosomal protein uL13 family. Part of the 50S ribosomal subunit.

Functionally, this protein is one of the early assembly proteins of the 50S ribosomal subunit, although it is not seen to bind rRNA by itself. It is important during the early stages of 50S assembly. This Azoarcus sp. (strain BH72) protein is Large ribosomal subunit protein uL13.